The following is an 892-amino-acid chain: Dipeptidyl peptidase 8 (892 aa).

Residues serine 749, aspartate 827, and histidine 859 each act as charge relay system in the active site.

This sequence belongs to the peptidase S9B family. DPPIV subfamily. In terms of assembly, homodimer. Forms a ternary complex with NLRP1, composed of a DPP8 homodimer, one full-length NLRP1 protein, and one cleaved C-terminus of NLRP1 (NACHT, LRR and PYD domains-containing protein 1, C-terminus). Forms a ternary complex with CARD8, composed of a DPP8 homodimer, one full-length NLRP1 protein, and one cleaved C-terminus of CARD8 (Caspase recruitment domain-containing protein 8, C-terminus). In the ternary complex, only one subunit of the DPP8 homodimer is bound to NLRP1 or CARD8.

The protein resides in the cytoplasm. It catalyses the reaction Release of an N-terminal dipeptide, Xaa-Yaa-|-Zaa-, from a polypeptide, preferentially when Yaa is Pro, provided Zaa is neither Pro nor hydroxyproline.. Inhibited by zinc. Inhibited by the serine proteinase inhibitor 4-(2-aminoethyl)benzenesulphonyl fluoride (AEBSF), and by di-isopropylfluorophosphate. Specifically inhibited by isoindoline derivatives. Inhibited by Val-boroPro (Talabostat, PT-100), a non-selective inhibitor, which triggers pyroptosis in monocytes and macrophages. In terms of biological role, dipeptidyl peptidase that cleaves off N-terminal dipeptides from proteins having a Pro or Ala residue at position 2. Acts as a key inhibitor of caspase-1-dependent monocyte and macrophage pyroptosis in resting cells by preventing activation of NLRP1 and CARD8. Sequesters the cleaved C-terminal part of NLRP1 and CARD8, which respectively constitute the active part of the NLRP1 and CARD8 inflammasomes, in a ternary complex, thereby preventing their oligomerization and activation. The dipeptidyl peptidase activity is required to suppress NLRP1 and CARD8; however, neither NLRP1 nor CARD8 are bona fide substrates of DPP8, suggesting the existence of substrate(s) required for NLRP1 and CARD8 inhibition. In Mus musculus (Mouse), this protein is Dipeptidyl peptidase 8.